A 125-amino-acid chain; its full sequence is DNA-directed RNA polymerase subunit omega (125 aa).

This sequence belongs to the RNA polymerase subunit omega family. As to quaternary structure, the RNAP catalytic core consists of 2 alpha, 1 beta, 1 beta' and 1 omega subunit. When a sigma factor is associated with the core the holoenzyme is formed, which can initiate transcription.

It carries out the reaction RNA(n) + a ribonucleoside 5'-triphosphate = RNA(n+1) + diphosphate. In terms of biological role, promotes RNA polymerase assembly. Latches the N- and C-terminal regions of the beta' subunit thereby facilitating its interaction with the beta and alpha subunits. This chain is DNA-directed RNA polymerase subunit omega, found in Zymomonas mobilis subsp. mobilis (strain ATCC 31821 / ZM4 / CP4).